A 157-amino-acid polypeptide reads, in one-letter code: Cuticle protein 19 (157 aa).

Tandem repeats lie at residues 11–14 (AAPA), 18–21 (AAPA), 24–27 (AAPA), 29–32 (AAPA), 39–42 (AAPA), and 47–50 (AAPA). Positions 56–127 (YPKYAFEYGV…SGPSAHPAPA (72 aa)) constitute a Chitin-binding type R&amp;R domain. Copy 7 of the repeat occupies 141 to 144 (AAPA).

Its function is as follows. Component of the cuticle of migratory locust which contains more than 100 different structural proteins. This is Cuticle protein 19 from Locusta migratoria (Migratory locust).